The primary structure comprises 180 residues: tRNA (cytidine(56)-2'-O)-methyltransferase (180 aa).

Residues L83, 115–119 (GAEKV), and 133–140 (VGNQPHSE) each bind S-adenosyl-L-methionine.

The protein belongs to the aTrm56 family. As to quaternary structure, homodimer.

The protein resides in the cytoplasm. It carries out the reaction cytidine(56) in tRNA + S-adenosyl-L-methionine = 2'-O-methylcytidine(56) in tRNA + S-adenosyl-L-homocysteine + H(+). Functionally, specifically catalyzes the AdoMet-dependent 2'-O-ribose methylation of cytidine at position 56 in tRNAs. The polypeptide is tRNA (cytidine(56)-2'-O)-methyltransferase (Methanococcus aeolicus (strain ATCC BAA-1280 / DSM 17508 / OCM 812 / Nankai-3)).